Reading from the N-terminus, the 300-residue chain is MNFQGLVLTDNCKNQWVVGPLIGKGGFGSIYTTNDNNYVVKIEPKANGSLFTEQAFYTRVLKPSVIEEWKKSHNIKHVGLITCKAFGLYKSINVEYRFLVINRLGADLDAVIRANNNRLPKRSVMLIGIEILNTIQFMHEQGYSHGDIKASNIVLDQIDKNKLYLVDYGLVSKFMSNGEHVPFIRNPNKMDNGTLEFTPIDSHKGYVVSRRGDLETLGYCMIRWLGGILPWTKISETKNCALVSATKQKYVNNTATLLMTSLQYAPRELLQYITMVNSLTYFEEPNYDEFRHILMQGVYY.

The Protein kinase domain occupies 16-282 (WVVGPLIGKG…ITMVNSLTYF (267 aa)). ATP contacts are provided by residues 22–30 (IGKGGFGSI) and Lys45. Asp147 serves as the catalytic Proton acceptor.

It belongs to the protein kinase superfamily. Ser/Thr protein kinase family. Poxviruses subfamily. As to quaternary structure, interacts with host JIP1; this interaction increases the amount of MAPK bound to JIP1 and subsequently increases the activity of transcription factors, such as JUN, that respond to these complexes. Interacts with protein OPG198; this interaction inhibits the repressive activity of OPG198 pseudokinase on viral replication factory formation. It depends on Mg(2+) as a cofactor. Autophosphorylated.

Its subcellular location is the virion. It localises to the host cytoplasm. It carries out the reaction L-seryl-[protein] + ATP = O-phospho-L-seryl-[protein] + ADP + H(+). The catalysed reaction is L-threonyl-[protein] + ATP = O-phospho-L-threonyl-[protein] + ADP + H(+). Its function is as follows. Essential serine/threonine-protein kinase that plays different role in the viral life cycle. Phosphorylates the host small ribosomal protein RACK1 thereby customizing the ribosomes to a state optimal for viral mRNAs (which contain poly-A leaders) but not for host mRNAs. Facilitates viral DNA replication by inhibiting host BANF1, a cellular host defense responsive to foreign DNA. Phosphorylates host BANF1 on serine and threonine residues; this leads to BANF1 relocalization to the cytoplasm, loss of dimerization and impaired DNA binding activity. Indeed, BANF1 activity depends on its DNA-binding property which is blocked by VPK1-mediated phosphorylation. Required for viral intermediate genes expression, probably by inhibiting host BANF1. Modulates cellular responses via host JUN by two different mechanisms, either by direct phosphorylation or by modulation of upstream JIP1-MAPK complexes. Seems to participate in the accumulation/processing of late proteins and thus in virion maturation. In addition, inhibits B12 repressive activity on viral DNA replication via a phosphorylation-dependent mechanism. In Bos taurus (Bovine), this protein is B1 kinase (OPG187).